A 711-amino-acid polypeptide reads, in one-letter code: Consortin (711 aa).

Disordered stretches follow at residues 1 to 157 (MDDS…NDPP), 294 to 332 (AVGTEAAAKEPEIETCPSTDPSGDRHEEEPQESSPGCHQ), 370 to 389 (ETAGSRSGPAAASNACKDSS), 394 to 432 (PPTEDHCGVARDPKVAPPSESVAEQKLSTGDDGALPGLI), and 457 to 496 (PRDQPHSSEVAEPRQPDVTASDGKSAQSQAGLETGPESAL). Residues 1–650 (MDDSDPPTYS…LEQDEVGGGS (650 aa)) lie on the Cytoplasmic side of the membrane. The segment covering 63-77 (VSEQDSLNNNESFPS) has biased composition (polar residues). Residues 109–120 (PAKRSPRAKKSS) are compositionally biased toward basic residues. Basic and acidic residues-rich tracts occupy residues 396 to 407 (TEDHCGVARDPK) and 457 to 471 (PRDQPHSSEVAEPRQ). Residues 478-487 (DGKSAQSQAG) show a composition bias toward polar residues. Residues 651 to 671 (CILLILLCIATVFLSVGGTAL) form a helical membrane-spanning segment. At 672 to 711 (YCTLGNIESPVCTDFADNVDFYYTKLLQGVAGLKHWVYLS) the chain is on the extracellular side.

The protein belongs to the CNST family. In terms of assembly, interacts with connexins GJA1/CX43, GJB1/CX32, GJB2/CX26, GJB3/CX31, GJB6/CX30 and GJC1/CX45. Also interacts with GGA1 and GGA2. Does not interact with PANX1.

Its subcellular location is the cell membrane. The protein resides in the golgi apparatus. It is found in the trans-Golgi network membrane. The protein localises to the cytoplasmic vesicle. It localises to the secretory vesicle. Functionally, required for targeting of connexins to the plasma membrane. This Mus musculus (Mouse) protein is Consortin (Cnst).